Reading from the N-terminus, the 431-residue chain is 2-oxoisovalerate dehydrogenase subunit alpha, mitochondrial (431 aa).

140–142 (QYR) contacts thiamine diphosphate. Residues Ser189, Thr194, and Gln195 each coordinate K(+).

It belongs to the BCKDHA family. It depends on thiamine diphosphate as a cofactor.

It localises to the mitochondrion matrix. It carries out the reaction N(6)-[(R)-lipoyl]-L-lysyl-[protein] + 3-methyl-2-oxobutanoate + H(+) = N(6)-[(R)-S(8)-2-methylpropanoyldihydrolipoyl]-L-lysyl-[protein] + CO2. The protein operates within lipid metabolism; fatty acid biosynthesis. Its function is as follows. The branched-chain alpha-keto dehydrogenase complex catalyzes the overall conversion of alpha-keto acids to acyl-CoA and CO(2). It contains multiple copies of three enzymatic components: branched-chain alpha-keto acid decarboxylase (E1), lipoamide acyltransferase (E2) and lipoamide dehydrogenase (E3). Required for the production of the monomethyl branched-chain fatty acids (mmBCFAs) isopentadecanoate (C15iso) and isoheptadecanoate (C17iso). The sequence is that of 2-oxoisovalerate dehydrogenase subunit alpha, mitochondrial from Caenorhabditis elegans.